Here is a 224-residue protein sequence, read N- to C-terminus: GTP-binding protein RHO3 (224 aa).

Position 22-29 (22-29 (GDGACGKT)) interacts with GTP. The Effector region signature appears at 44-52 (YEPTVFENY). GTP-binding positions include 69 to 73 (DTAGQ) and 127 to 130 (LKCD). Residues 205–224 (TPKGARDSAPEAESSSCTIM) form a disordered region. Residue Cys221 is modified to Cysteine methyl ester. Cys221 carries S-geranylgeranyl cysteine lipidation. The propeptide at 222-224 (TIM) is removed in mature form.

Belongs to the small GTPase superfamily. Rho family.

The protein localises to the cell membrane. Involved in the regulation of actin polarization. Rho proteins are required for distinct steps during polarized hyphal growth of A.gossypii. The sequence is that of GTP-binding protein RHO3 (RHO3) from Eremothecium gossypii (strain ATCC 10895 / CBS 109.51 / FGSC 9923 / NRRL Y-1056) (Yeast).